We begin with the raw amino-acid sequence, 319 residues long: Transcription factor VBP (319 aa).

Low complexity-rich tracts occupy residues 1–31 (MPGR…GAVA) and 143–158 (ASAS…STAV). Disordered regions lie at residues 1-35 (MPGR…QQPE) and 139-186 (EKEP…DPDC). Positions 159 to 180 (YQQSEAASSTESPPQNERNTPS) are enriched in polar residues. The 64-residue stretch at 243-306 (DEKYWTRRKK…GRCKNIVSKY (64 aa)) folds into the bZIP domain. The segment at 245 to 265 (KYWTRRKKNNVAAKRSRDARR) is basic motif. The tract at residues 266 to 273 (LKENQITI) is leucine-zipper.

It belongs to the bZIP family. PAR subfamily. As to quaternary structure, binds DNA as a homodimer or a heterodimer. Exists as a stable dimer in the absence of DNA. As to expression, isoform 1 and isoform 3 are expressed in a variety of somatic tissues, including liver, heart, intestine, stomach and kidney. Both isoforms are also expressed in hepatoma (LMH) cells and in embryonic fibroblast cell lines. Isoform 2 and isoform 4 are expressed in adult heart and intestine.

The protein resides in the nucleus. Transcription factor that binds to and transactivates the vitellogenin II (VTG2) promoter. Binds to the palindromic sequence 5'-GTTTACATAAAC-3'. This is Transcription factor VBP (TEF) from Gallus gallus (Chicken).